A 269-amino-acid chain; its full sequence is Small ribosomal subunit protein uS3m (269 aa).

The protein belongs to the universal ribosomal protein uS3 family.

Its subcellular location is the mitochondrion. Essential for mitochondrial protein synthesis and required for the maturation of small ribosomal subunits. In Monosporozyma servazzii (Yeast), this protein is Small ribosomal subunit protein uS3m (VAR1).